The primary structure comprises 652 residues: Regulator of DNA class I crossover intermediates 1 (652 aa).

The binds DNA containing a D-loop DNA-binding region spans 1–231; the sequence is MNWVGGSRSR…TLFERLNSLG (231 aa). Disordered stretches follow at residues 363–434 and 469–506; these read NKTS…NIPS and KISL…EDQI. Basic and acidic residues predominate over residues 377–388; it reads YQREYNKNERND. The span at 389 to 401 shows a compositional bias: polar residues; that stretch reads LSTSFENDYYPSS. Over residues 402–417 the composition is skewed to basic and acidic residues; the sequence is SERKEKFENDYQEKTP. The span at 473 to 498 shows a compositional bias: low complexity; that stretch reads DSAQSSRSTSYSPRPTDSCFSSSSDL.

As to quaternary structure, interacts with MSH5. Interacts with TEX11.

Its subcellular location is the chromosome. Functionally, involved in recombination, probably acting by stabilizing recombination intermediates during meiotic crossover formation. Required for normal germline development and fertility. Required for meiotic progression, complete chromosomal synapsis and crossover formation. Binds double-stranded DNA. However, also binds branched DNA molecules, such as those containing a D-loop or Holliday junction structure. Probably not required for formation of DNA double-strand breaks (DSBs). Also binds RNA in an RNA structure-independent manner, with a preference for binding 3'-UTR regions of mRNAs; may stabilize bound RNAs. This is Regulator of DNA class I crossover intermediates 1 from Homo sapiens (Human).